The primary structure comprises 235 residues: Derlin-3 (235 aa).

Over Met1–Ala22 the chain is Cytoplasmic. Residues Ala23 to Phe43 traverse the membrane as a helical segment. At Asn44–Val58 the chain is on the lumenal side. Residues Thr59–Phe79 form a helical membrane-spanning segment. Over Arg80–Val98 the chain is Cytoplasmic. A helical transmembrane segment spans residues Phe99–Phe119. Topologically, residues Leu120 to Ala157 are lumenal. The helical transmembrane segment at Leu158–Val178 threads the bilayer. The Cytoplasmic segment spans residues Gly179 to Gln235. Positions Pro216 to Gln235 are disordered. The segment covering Glu223–Gln235 has biased composition (pro residues).

This sequence belongs to the derlin family. Forms homo- and heterooligomers with DERL2 and, to a lesser extent, with DERL1. Interacts with VCP and EDEM1. Interacts with SELENOK and SELENOS. Interacts with the signal recognition particle/SRP and the SRP receptor; in the process of endoplasmic reticulum stress-induced pre-emptive quality control. As to expression, unlike DERL1 and DERL2, restricted to several tissues. Expressed at high levels in placenta, pancreas, spleen and small intestine.

It localises to the endoplasmic reticulum membrane. Functional component of endoplasmic reticulum-associated degradation (ERAD) for misfolded lumenal glycoproteins, but not that of misfolded nonglycoproteins. May act by forming a channel that allows the retrotranslocation of misfolded glycoproteins into the cytosol where they are ubiquitinated and degraded by the proteasome. May mediate the interaction between VCP and the misfolded glycoproteins. May be involved in endoplasmic reticulum stress-induced pre-emptive quality control, a mechanism that selectively attenuates the translocation of newly synthesized proteins into the endoplasmic reticulum and reroutes them to the cytosol for proteasomal degradation. This chain is Derlin-3, found in Homo sapiens (Human).